Reading from the N-terminus, the 93-residue chain is MGAMSPWHWAIVALVVVILFGSKKLPDAARGLGRSLRIFKSEVKEMQNDNSTPAPTAQQSAPAELPVADTTTAPVTPPAPVQPQPQHTEPKSA.

Residues 1 to 21 traverse the membrane as a helical segment; it reads MGAMSPWHWAIVALVVVILFG. The segment at 44–93 is disordered; sequence KEMQNDNSTPAPTAQQSAPAELPVADTTTAPVTPPAPVQPQPQHTEPKSA. The segment covering 51 to 74 has biased composition (low complexity); sequence STPAPTAQQSAPAELPVADTTTAP.

This sequence belongs to the TatA/E family. The Tat system comprises two distinct complexes: a TatABC complex, containing multiple copies of TatA, TatB and TatC subunits, and a separate TatA complex, containing only TatA subunits. Substrates initially bind to the TatABC complex, which probably triggers association of the separate TatA complex to form the active translocon.

The protein localises to the cell membrane. Part of the twin-arginine translocation (Tat) system that transports large folded proteins containing a characteristic twin-arginine motif in their signal peptide across membranes. TatA could form the protein-conducting channel of the Tat system. This is Sec-independent protein translocase protein TatA from Rhodococcus opacus (strain B4).